Reading from the N-terminus, the 363-residue chain is Succinyl-diaminopimelate desuccinylase (363 aa).

His-63 contributes to the Zn(2+) binding site. Asp-65 is an active-site residue. Asp-94 contacts Zn(2+). Glu-123 acts as the Proton acceptor in catalysis. Zn(2+)-binding residues include Glu-124, Glu-152, and His-337.

It belongs to the peptidase M20A family. DapE subfamily. In terms of assembly, homodimer. It depends on Zn(2+) as a cofactor. Co(2+) is required as a cofactor.

The enzyme catalyses N-succinyl-(2S,6S)-2,6-diaminopimelate + H2O = (2S,6S)-2,6-diaminopimelate + succinate. It functions in the pathway amino-acid biosynthesis; L-lysine biosynthesis via DAP pathway; LL-2,6-diaminopimelate from (S)-tetrahydrodipicolinate (succinylase route): step 3/3. Catalyzes the hydrolysis of N-succinyl-L,L-diaminopimelic acid (SDAP), forming succinate and LL-2,6-diaminopimelate (DAP), an intermediate involved in the bacterial biosynthesis of lysine and meso-diaminopimelic acid, an essential component of bacterial cell walls. This chain is Succinyl-diaminopimelate desuccinylase, found in Campylobacter concisus (strain 13826).